A 688-amino-acid chain; its full sequence is MQVSSLNEVKIYSLSCGKSLPEWLSDRKKRALQKKDVDVRRRIELIQDFEMPTVCTTIKVSKDGQYILATGTYKPRVRCYDTYQLSLKFERCLDSEVVTFEILSDDYSKIVFLHNDRYIEFHSQSGFYYKTRIPKFGRDFSYHYPSCDLYFVGASSEVYRLNLEQGRYLNPLQTDAAENNVCDINSVHGLFATGTIEGRVECWDPRTRNRVGLLDCALNSVTADSEINSLPTISALKFNGALTMAVGTTTGQVLLYDLRSDKPLLVKDHQYGLPIKSVHFQDSLDLILSADSRIVKMWNKNSGKIFTSLEPEHDLNDVCLYPNSGMLLTANETPKMGIYYIPVLGPAPRWCSFLDNLTEELEENPESTVYDDYKFVTKKDLENLGLTHLIGSPFLRAYMHGFFMDIRLYHKVKLMVNPFAYEEYRKDKIRQKIEETRAQRVQLKKLPKVNKELALKLIEEEEEKQKSTWKKKVKSLPNILTDDRFKVMFENPDFQVDEESEEFRLLNPLVSKISEKRKKKLRLLEQQELREKEEEEEPEGKPSDAESSESSDDEKAWVEEVRKQRRLLQQEEKVKRQERLKEDQQTVLKPQFYEIKAGEEFRSFKDSATKQKLMNKTLEDRLKIEAKNGTLSVSDTTVGSKQLTFTLKRSEQQKKQQEAEKLHRQERKRLRRSAGHLKSRHKRGRSFH.

The residue at position 1 (methionine 1) is an N-acetylmethionine. Position 25 is a phosphoserine (serine 25). WD repeat units follow at residues 44 to 82 (ELIQ…CYDT), 88 to 124 (KFER…FHSQ), 127 to 163 (FYYK…RLNL), 170 to 205 (NPLQ…CWDP), 219 to 258 (NSVT…LYDL), 262 to 300 (KPLL…MWNK), and 304 to 341 (KIFT…IYYI). Positions 423–446 (EYRKDKIRQKIEETRAQRVQLKKL) form a coiled coil. Serine 475 carries the post-translational modification Phosphoserine. Threonine 481 carries the phosphothreonine modification. The residue at position 514 (serine 514) is a Phosphoserine. Coiled coils occupy residues 514-589 (SEKR…TVLK) and 640-673 (SKQL…LRRS). 2 disordered regions span residues 529 to 557 (LREK…EKAW) and 645 to 688 (FTLK…RSFH). Residues 648-663 (KRSEQQKKQQEAEKLH) are compositionally biased toward basic and acidic residues. Residues 664-688 (RQERKRLRRSAGHLKSRHKRGRSFH) show a composition bias toward basic residues.

It belongs to the WD repeat NOL10/ENP2 family.

It is found in the nucleus. Its subcellular location is the nucleolus. The sequence is that of Nucleolar protein 10 (NOL10) from Homo sapiens (Human).